We begin with the raw amino-acid sequence, 281 residues long: Pantothenate synthetase (281 aa).

30 to 37 (MGNLHQGH) serves as a coordination point for ATP. Histidine 37 functions as the Proton donor in the catalytic mechanism. Glutamine 61 provides a ligand contact to (R)-pantoate. Glutamine 61 is a beta-alanine binding site. 149 to 152 (GNKD) contacts ATP. Glutamine 155 contributes to the (R)-pantoate binding site. ATP-binding positions include isoleucine 178 and 186–189 (MSSR).

Belongs to the pantothenate synthetase family. In terms of assembly, homodimer.

The protein resides in the cytoplasm. The enzyme catalyses (R)-pantoate + beta-alanine + ATP = (R)-pantothenate + AMP + diphosphate + H(+). The protein operates within cofactor biosynthesis; (R)-pantothenate biosynthesis; (R)-pantothenate from (R)-pantoate and beta-alanine: step 1/1. In terms of biological role, catalyzes the condensation of pantoate with beta-alanine in an ATP-dependent reaction via a pantoyl-adenylate intermediate. The protein is Pantothenate synthetase of Shewanella baltica (strain OS195).